Here is a 21-residue protein sequence, read N- to C-terminus: 40 kDa major outer membrane protein (21 aa).

In terms of assembly, disulfide bond interactions within and between MOMP molecules and other components form high molecular-weight oligomers.

It localises to the cell outer membrane. Functionally, structural rigidity of the outer membrane of elementary bodies and porin forming, permitting diffusion of solutes through the intracellular reticulate body membrane. The polypeptide is 40 kDa major outer membrane protein (Actinobacillus pleuropneumoniae (Haemophilus pleuropneumoniae)).